The chain runs to 660 residues: UvrABC system protein C (660 aa).

The 80-residue stretch at Glu16 to Val95 folds into the GIY-YIG domain. The UVR domain occupies Asp208–Ala243. A disordered region spans residues Gly469–Thr501. Residues Ala476–Asp486 are compositionally biased toward low complexity.

This sequence belongs to the UvrC family. In terms of assembly, interacts with UvrB in an incision complex.

The protein resides in the cytoplasm. Its function is as follows. The UvrABC repair system catalyzes the recognition and processing of DNA lesions. UvrC both incises the 5' and 3' sides of the lesion. The N-terminal half is responsible for the 3' incision and the C-terminal half is responsible for the 5' incision. This chain is UvrABC system protein C, found in Salinispora arenicola (strain CNS-205).